A 219-amino-acid polypeptide reads, in one-letter code: Transmembrane protein 17B (219 aa).

Asparagine 26 carries an N-linked (GlcNAc...) asparagine glycan. A run of 4 helical transmembrane segments spans residues 51 to 71 (MMLY…IITM), 84 to 104 (ILLT…LYIG), 116 to 136 (LAGF…FLLT), and 147 to 167 (LAVH…SFLV). Asparagine 195 and asparagine 203 each carry an N-linked (GlcNAc...) asparagine glycan.

This sequence belongs to the TMEM17 family. Part of the tectonic-like complex (also named B9 complex).

It is found in the cell projection. The protein localises to the cilium membrane. Functionally, transmembrane component of the tectonic-like complex, a complex localized at the transition zone of primary cilia and acting as a barrier that prevents diffusion of transmembrane proteins between the cilia and plasma membranes. Required for ciliogenesis and sonic hedgehog/SHH signaling. In Xenopus tropicalis (Western clawed frog), this protein is Transmembrane protein 17B (Tmem17-b).